A 1505-amino-acid chain; its full sequence is MPVRPDPQQLEKCIDDALRKNDFKPLVTLLQIDICEDVKIKCSKQFLRKLDDLICRELHKKDIQTISNILISIGRCSKNIFILGQTGLQTMIKQGLVQKMVSWFENSKEIILSQRQSKDEAVMNMIEDLFDLLMVVYDVNDEGKNQVLESFIPHICALVIDSRVNFCIQQEALKKMNLMLDRIPQDANKILCNQEILTLMSNMGERILDVGDYELQVGIVEALCRMTTEKRRQELAYEWFSMDFIANAFKKIKDCEFETDCRIFLNLVNGMLGDRRRVFTFPCLSAFLGKYELQIPSDEKLEEFWIDFNLGSHTLSFYIAGDDDDHQWEAVTVPEEKVDMYNIEVRESKKLLTLTLKNIVKISKKEGKELLLYFDAALEITNVTKKLFGGNKYKEFTRKQDISVAKTSIHVLFDASGSQILVPESQPSPVKENLIHLKEKSNLQKKLTNPLEPDNSSSQRDRKNSQDEITTPSRKKMSEASMIVPDTDRYTVRSPILLINTSTPRRSRAPLQAIHSAEKAVSKTSESGVDYAVSLKSRQSDGRNRGNNRANHNKTATVQNKGHEHHESPDQTFNEIEETLSDAYAVEKVDKPVLPGVLDISKNKAHSRWACWTPVTTIKLCNNQRSCALPGDTFTQDTGVNKKCTKQKSVSDDDSEETQRVKYSKDVIKCNKSEEAEVCERNIQEQNHPKYSQKKNTANAKKNDWHIESETTYKSVLLNKTTEESLIYKKTCVLSKDVNTTICDKSPSRKSMRSHTKSRKELMSEVTSCELDEIPVRENSKGKRFTGTAESLINLINKRYNSSDDMISTRKLKEPRDGSGFSKKPELQFNKVQRKSYRKLKTVVNVTSECPLNDVYNFSLNGADEPVIKLGIQEFQATTREASMDNSIKLVDVRNRDERDLSLKTKDERILSHERKTLFSDTETECGWDDSKTDISWLRKPKSKRLMDYSRNKNTKKCKSIKSRSSTEKGQPRSTVVLSKNIAKNDYEVIVDGRTRLPRRATKTKKNYKDLSTSGSESESEKEISYLFKDKLPTKEETVHSSAQTKKLPKKQQKVFNTEALKGQPSEEQKNSSTLRNGREDSLYLSSASVSGSSSSVEVMRCTEKITERDFTQDYDYITKSLSPYPKAASPEFLNRSNRVVGHGKSPRISETSAVCVRKSCSPASGLPFSPRHTTKNNSVMNIKNTNSVINNQRTQHCNSYSDVSSNSSEKLYMEPESPDSCENHVQSKREENHAASPFSLSSEKIEKIWFDMPNDNTHVSGPSQRGSKRRMYLEEDELSNPSEAEVQEAEEREHLVSKKLCQREHFDQHTSETSLSTPEFSVPKDWQQELQGAGMFYDNINSDYKRKTDTQHKIMDDFTTKTLKLTQQHLLAMACQARGHRDENIDKFQVTLLDELEKVEKDSQTLRDLEKEFVDIEEKIVHKMRAFHQSERERFRALKTSLDKSLLVYNSVYEENVLTSEMCLMKANMKMLQDKLLKEMHEEELLNIRRGLESLFKDHEGNNA.

Positions 439 to 483 (EKSNLQKKLTNPLEPDNSSSQRDRKNSQDEITTPSRKKMSEASMI) are disordered. Residues Ser-457 and Ser-465 each carry the phosphoserine modification. A Phosphothreonine modification is found at Thr-471. Ser-494 is subject to Phosphoserine. Thr-503 is modified (phosphothreonine). 4 positions are modified to phosphoserine: Ser-507, Ser-516, Ser-525, and Ser-534. Positions 536–571 (KSRQSDGRNRGNNRANHNKTATVQNKGHEHHESPDQ) are disordered. Phosphothreonine is present on residues Thr-613 and Thr-638. Residues Ser-651, Ser-655, and Ser-746 each carry the phosphoserine modification. The segment at 745–764 (KSPSRKSMRSHTKSRKELMS) is disordered. Residues 748–758 (SRKSMRSHTKS) show a composition bias toward basic residues. Ser-920 carries the phosphoserine modification. At Thr-922 the chain carries Phosphothreonine. 2 disordered regions span residues 949-974 (YSRN…QPRS) and 1035-1080 (KEET…NGRE). Positions 953–962 (KNTKKCKSIK) are enriched in basic residues. Phosphoserine is present on residues Ser-1121, Ser-1123, Ser-1130, Ser-1146, Ser-1150, Ser-1162, Ser-1165, and Ser-1170. Thr-1174 is modified (phosphothreonine). Ser-1188 carries the phosphoserine modification. The disordered stretch occupies residues 1199–1239 (NSYSDVSSNSSEKLYMEPESPDSCENHVQSKREENHAASPF). Positions 1200 to 1209 (SYSDVSSNSS) are enriched in low complexity. A phosphoserine mark is found at Ser-1218 and Ser-1221. Residues 1222 to 1234 (CENHVQSKREENH) show a composition bias toward basic and acidic residues. Phosphoserine occurs at positions 1237, 1280, and 1283. Thr-1318 bears the Phosphothreonine mark. A coiled-coil region spans residues 1384–1435 (ENIDKFQVTLLDELEKVEKDSQTLRDLEKEFVDIEEKIVHKMRAFHQSERER).

Belongs to the SYCP2 family. Component of the lateral elements of synaptonemal complexes. Interacts with TEX11. Heterodimer with SYCP3. Interacts with SYCP3, SMC1A and SMC3. Post-translationally, phosphorylated. In terms of tissue distribution, detected in spermatocytes and testis (at protein level). Spermatocytes and oocytes. Meiotic prophase cells.

The protein resides in the nucleus. Its subcellular location is the chromosome. Its function is as follows. Major component of the axial/lateral elements of synaptonemal complexes (SCS) during meiotic prophase. Plays a role in the assembly of synaptonemal complexes. Required for normal meiotic chromosome synapsis during oocyte and spermatocyte development and for normal male and female fertility. Required for insertion of SYCP3 into synaptonemal complexes. May be involved in the organization of chromatin by temporarily binding to DNA scaffold attachment regions. Requires SYCP3, but not SYCP1, in order to be incorporated into the axial/lateral elements. This is Synaptonemal complex protein 2 (Sycp2) from Rattus norvegicus (Rat).